A 475-amino-acid polypeptide reads, in one-letter code: Ribulose bisphosphate carboxylase large chain (475 aa).

Substrate is bound by residues N123 and T173. Residue K175 is the Proton acceptor of the active site. Residue K177 coordinates substrate. Mg(2+)-binding residues include K201, D203, and E204. K201 is modified (N6-carboxylysine). H294 (proton acceptor) is an active-site residue. Residues R295, H327, and S379 each contribute to the substrate site.

Belongs to the RuBisCO large chain family. Type I subfamily. As to quaternary structure, heterohexadecamer of 8 large chains and 8 small chains. The cofactor is Mg(2+).

The protein localises to the plastid. The protein resides in the cyanelle. It catalyses the reaction 2 (2R)-3-phosphoglycerate + 2 H(+) = D-ribulose 1,5-bisphosphate + CO2 + H2O. The enzyme catalyses D-ribulose 1,5-bisphosphate + O2 = 2-phosphoglycolate + (2R)-3-phosphoglycerate + 2 H(+). In terms of biological role, ruBisCO catalyzes two reactions: the carboxylation of D-ribulose 1,5-bisphosphate, the primary event in carbon dioxide fixation, as well as the oxidative fragmentation of the pentose substrate in the photorespiration process. Both reactions occur simultaneously and in competition at the same active site. The protein is Ribulose bisphosphate carboxylase large chain of Cyanophora paradoxa.